We begin with the raw amino-acid sequence, 265 residues long: Inositol monophosphatase 2 (265 aa).

Mg(2+)-binding residues include glutamate 65, aspartate 86, leucine 88, and aspartate 89. Glutamate 65 lines the substrate pocket. Residues 88-91 (LDGT), 189-191 (GSC), glutamate 208, and aspartate 216 contribute to the substrate site. Position 216 (aspartate 216) interacts with Mg(2+).

This sequence belongs to the inositol monophosphatase superfamily. It depends on Mg(2+) as a cofactor. In terms of tissue distribution, low expression in roots, stems, leaves, flowers and young and mature green fruits. Expressed in the stem/leaf junctions, below the shoot apex and on the abaxial side of the petiole of the first expanded leaflets.

The catalysed reaction is a myo-inositol phosphate + H2O = myo-inositol + phosphate. Its pathway is polyol metabolism; myo-inositol biosynthesis; myo-inositol from D-glucose 6-phosphate: step 2/2. Its function is as follows. Responsible for the provision of inositol required for synthesis of phosphatidylinositol and polyphosphoinositides. This Solanum lycopersicum (Tomato) protein is Inositol monophosphatase 2 (IMP2).